Consider the following 361-residue polypeptide: Chorismate synthase (361 aa).

Arg48 contributes to the NADP(+) binding site. FMN-binding positions include 125–127 (RSS), 238–239 (NA), Gly278, 293–297 (KPTSS), and Arg319.

This sequence belongs to the chorismate synthase family. As to quaternary structure, homotetramer. It depends on FMNH2 as a cofactor.

The enzyme catalyses 5-O-(1-carboxyvinyl)-3-phosphoshikimate = chorismate + phosphate. Its pathway is metabolic intermediate biosynthesis; chorismate biosynthesis; chorismate from D-erythrose 4-phosphate and phosphoenolpyruvate: step 7/7. In terms of biological role, catalyzes the anti-1,4-elimination of the C-3 phosphate and the C-6 proR hydrogen from 5-enolpyruvylshikimate-3-phosphate (EPSP) to yield chorismate, which is the branch point compound that serves as the starting substrate for the three terminal pathways of aromatic amino acid biosynthesis. This reaction introduces a second double bond into the aromatic ring system. This is Chorismate synthase from Aliivibrio fischeri (strain MJ11) (Vibrio fischeri).